A 272-amino-acid chain; its full sequence is Alcohol dehydrogenase-related 31 kDa protein (272 aa).

Residue 11–34 (YVADCGGIALETSKVLMTKNIAKL) coordinates NAD(+). Ser139 lines the substrate pocket. The active-site Proton acceptor is Tyr152.

It belongs to the short-chain dehydrogenases/reductases (SDR) family.

This chain is Alcohol dehydrogenase-related 31 kDa protein (Adhr), found in Drosophila mauritiana (Fruit fly).